We begin with the raw amino-acid sequence, 86 residues long: Small ribosomal subunit protein bS20 (86 aa).

Residues 1-27 (MANSKSAKKRATQAERRRQHNASRRSM) show a composition bias toward basic residues. Residues 1-28 (MANSKSAKKRATQAERRRQHNASRRSMM) form a disordered region.

It belongs to the bacterial ribosomal protein bS20 family.

In terms of biological role, binds directly to 16S ribosomal RNA. The sequence is that of Small ribosomal subunit protein bS20 from Aliivibrio fischeri (strain MJ11) (Vibrio fischeri).